The sequence spans 213 residues: Orotate phosphoribosyltransferase (213 aa).

5-phospho-alpha-D-ribose 1-diphosphate is bound at residue Lys-26. 34–35 serves as a coordination point for orotate; it reads FF. 5-phospho-alpha-D-ribose 1-diphosphate is bound by residues 72 to 73, Arg-99, Lys-100, Lys-103, His-105, and 124 to 132; these read YK and DDVITAGTA. The orotate site is built by Thr-128 and Arg-156.

Belongs to the purine/pyrimidine phosphoribosyltransferase family. PyrE subfamily. Homodimer. Mg(2+) serves as cofactor.

The catalysed reaction is orotidine 5'-phosphate + diphosphate = orotate + 5-phospho-alpha-D-ribose 1-diphosphate. It functions in the pathway pyrimidine metabolism; UMP biosynthesis via de novo pathway; UMP from orotate: step 1/2. Functionally, catalyzes the transfer of a ribosyl phosphate group from 5-phosphoribose 1-diphosphate to orotate, leading to the formation of orotidine monophosphate (OMP). This chain is Orotate phosphoribosyltransferase, found in Escherichia coli O45:K1 (strain S88 / ExPEC).